The following is a 943-amino-acid chain: Glycine dehydrogenase (decarboxylating) (943 aa).

Lys-695 is modified (N6-(pyridoxal phosphate)lysine).

Belongs to the GcvP family. As to quaternary structure, the glycine cleavage system is composed of four proteins: P, T, L and H. The cofactor is pyridoxal 5'-phosphate.

It catalyses the reaction N(6)-[(R)-lipoyl]-L-lysyl-[glycine-cleavage complex H protein] + glycine + H(+) = N(6)-[(R)-S(8)-aminomethyldihydrolipoyl]-L-lysyl-[glycine-cleavage complex H protein] + CO2. Its function is as follows. The glycine cleavage system catalyzes the degradation of glycine. The P protein binds the alpha-amino group of glycine through its pyridoxal phosphate cofactor; CO(2) is released and the remaining methylamine moiety is then transferred to the lipoamide cofactor of the H protein. The sequence is that of Glycine dehydrogenase (decarboxylating) from Jannaschia sp. (strain CCS1).